The primary structure comprises 135 residues: Alpha-ketoglutarate dehydrogenase subunit 4, mitochondrial (135 aa).

The protein belongs to the alpha-ketoglutarate dehydrogenase component 4 family. Component of the 2-oxoglutarate dehydrogenase complex (OGDC), also called alpha-ketoglutarate dehydrogenase (KGDH) complex. The copmplex is composed of the catalytic subunits OGDH (2-oxoglutarate dehydrogenase; also called E1 subunit), DLST (dihydrolipoamide succinyltransferase; also called E2 subunit) and DLD (dihydrolipoamide dehydrogenase; also called E3 subunit), and the assembly factor KGD4. Within OGDC, interacts (via N-terminus) with E3 subunit and (via C-terminus) with the complex core formed by E1 and E2 subunits.

The protein resides in the mitochondrion. Its function is as follows. Molecular adapter that is necessary to a form a stable 2-oxoglutarate dehydrogenase enzyme complex (OGDC). Required for incorporation of the E3 subunit into the E1-E2 core of mitochondrial OGDC, and acting as a stability factor for the fully assembled complex. In Chaetomium thermophilum (strain DSM 1495 / CBS 144.50 / IMI 039719) (Thermochaetoides thermophila), this protein is Alpha-ketoglutarate dehydrogenase subunit 4, mitochondrial (KGD4).